The following is a 268-amino-acid chain: Microtubule-associated protein RP/EB family member 1 (268 aa).

Residue alanine 2 is modified to N-acetylalanine. In terms of domain architecture, Calponin-homology (CH) spans asparagine 14–aspartate 116. At lysine 66 the chain carries N6-crotonyllysine. The residue at position 124 (tyrosine 124) is a Phosphotyrosine. An interaction with MTUS2/TIP150 region spans residues tyrosine 124–tyrosine 268. Residues leucine 146–aspartate 191 are disordered. Serine 155 carries the post-translational modification Phosphoserine. The 71-residue stretch at glycine 185–isoleucine 255 folds into the EB1 C-terminal domain. The interaction with APC stretch occupies residues threonine 206–glutamate 211. The segment at glutamate 208–tyrosine 268 is DCTN1-binding. Residue lysine 220 is modified to N6-acetyllysine. Residues lysine 220–isoleucine 242 form an APC-binding region. An interaction with SKA1 region spans residues glutamate 232 to isoleucine 255.

Belongs to the MAPRE family. Homodimer. Heterodimer with MAPRE3. Interacts with DCTN1, DCTN2, TERF1 and dynein intermediate chain. Interaction with DIAPH1 and DIAPH2. Interacts (via C-terminal residues 206-211) with APC (via C-terminal residues 2674-2845); the interaction inhibits association with and bundling of F-actin. Interacts with CLASP2, DST, KIF2C and STIM1; probably required for their targeting to the growing microtubule plus ends. Interacts with MTUS2; interaction is direct and probably targets MTUS2 to microtubules. Interacts (via C-terminus) with SKA1 (via SXIP motif); the interaction is direct and stabilizes the kinetochore-microtubule attachment of the SKA1 complex. Interacts with APC2. Interacts with CLASP1. Interacts with CDK5RAP2. According to another report, MAPRE1 does not interact with CDK5RAP2. Interacts with MACF1. Interacts with RABL2/RABL2A; binds preferentially to GTP-bound RABL2. Interacts with KCNAB2. Interacts (via C-terminus) with CLIP1. Interacts with SLAIN2 and SLAIN1. Interacts with KIF18B; this interaction is required for efficient accumulation of KIF18B at microtubule plus ends. Interacts with MISP. Interacts with KNSTRN. Interacts with NCKAP5L. Interacts with AKAP9. Interacts with PDE4DIP; this interaction, which is PDE4DIP isoform-specific, is required for its recruitment to the Golgi apparatus. Interacts with CAMSAP2. May form a pericentrosomal complex with AKAP9, CDK5RAP2 and PDE4DIP isoform 2/MMG8/SMYLE; within this complex, MAPRE1 binding to CDK5RAP2 may be mediated by PDE4DIP. Contrary to other mammalian species, does not interact with CDK5RAP2, possibly due to the lack of conservation of the MAPRE1-binding motif in rat CDK5RAP2. Interacts with AKNA. Interacts with GAS2L1, GAS2L2, and GAS2L3. Interacts with RARRES1 and AGBL2. Acetylation at Lys-220 by KAT2B/PCAF promotes dynamic kinetochore-microtubule interactions in early mitosis. In terms of processing, crotonylated by KAT5 during mitosis, promoting astral microtubule plasticity and dynamic connection between astral microtubules and the cortex during mitotic chromosome segregation, thereby ensuring accurate spindle positioning in mitosis. Decrotonylated by HDAC3.

Its subcellular location is the cytoplasm. The protein resides in the cytoskeleton. The protein localises to the microtubule organizing center. It is found in the centrosome. It localises to the golgi apparatus. Its subcellular location is the spindle. The protein resides in the spindle pole. Functionally, plus-end tracking protein (+TIP) that binds to the plus-end of microtubules and regulates the dynamics of the microtubule cytoskeleton. Recruits other +TIP proteins to microtubules by binding to a conserved Ser-X-Leu-Pro (SXLP) motif in their polypeptide chains. Promotes cytoplasmic microtubule nucleation and elongation. Involved in mitotic spindle positioning by stabilizing microtubules and promoting dynamic connection between astral microtubules and the cortex during mitotic chromosome segregation. Assists chromosome alignment in metaphase by recruiting the SKA complex to the spindle and stabilizing its interactions with microtubule bundles (K-fibers). Also acts as a regulator of minus-end microtubule organization: interacts with the complex formed by AKAP9 and PDE4DIP, leading to recruit CAMSAP2 to the Golgi apparatus, thereby tethering non-centrosomal minus-end microtubules to the Golgi, an important step for polarized cell movement. Promotes elongation of CAMSAP2-decorated microtubule stretches on the minus-end of microtubules. Acts as a regulator of autophagosome transport via interaction with CAMSAP2. Functions downstream of Rho GTPases and DIAPH1 in stable microtubule formation. May play a role in cell migration. The chain is Microtubule-associated protein RP/EB family member 1 (Mapre1) from Rattus norvegicus (Rat).